The chain runs to 402 residues: uncharacterized protein (402 aa).

12 helical membrane-spanning segments follow: residues 23–43 (IVSV…PLAV), 52–72 (LGYG…ATLL), 90–110 (VLYG…SVAI), 121–141 (LLVG…AAIG), 158–178 (WNGI…VLLV), 180–200 (WLGL…GFAL), 228–248 (GMGL…ITLY), 255–275 (ANAV…RLLF), 282–302 (LGGF…LLLL), 309–329 (WVGL…FPAF), 351–371 (LFVD…ANLF), and 375–395 (SMFL…IALH).

It belongs to the major facilitator superfamily. YhhS family.

Its subcellular location is the cell inner membrane. This is an uncharacterized protein from Pseudomonas aeruginosa (strain UCBPP-PA14).